The sequence spans 65 residues: Large ribosomal subunit protein bL35 (65 aa).

This sequence belongs to the bacterial ribosomal protein bL35 family.

In Proteus mirabilis (strain HI4320), this protein is Large ribosomal subunit protein bL35.